The sequence spans 152 residues: Protein SprT-like (152 aa).

The 142-residue stretch at 7 to 148 (QRLVEEVSLQ…GKCKGKLILI (142 aa)) folds into the SprT-like domain. H67 serves as a coordination point for Zn(2+). The active site involves E68. Position 71 (H71) interacts with Zn(2+).

It belongs to the SprT family. The cofactor is Zn(2+).

It is found in the cytoplasm. The protein is Protein SprT-like of Bacillus thuringiensis subsp. konkukian (strain 97-27).